A 134-amino-acid chain; its full sequence is ATP synthase epsilon chain (134 aa).

It belongs to the ATPase epsilon chain family. In terms of assembly, F-type ATPases have 2 components, CF(1) - the catalytic core - and CF(0) - the membrane proton channel. CF(1) has five subunits: alpha(3), beta(3), gamma(1), delta(1), epsilon(1). CF(0) has three main subunits: a, b and c.

The protein resides in the cellular thylakoid membrane. Its function is as follows. Produces ATP from ADP in the presence of a proton gradient across the membrane. The protein is ATP synthase epsilon chain of Prochlorococcus marinus (strain MIT 9515).